The following is a 204-amino-acid chain: uncharacterized protein (204 aa).

A helical transmembrane segment spans residues 160-180; the sequence is GLTVAAIASVVVAGAVTYLVV.

It to M.pneumoniae MPN_373 C-terminal region.

It localises to the cell membrane. This is an uncharacterized protein from Mycoplasma pneumoniae (strain ATCC 29342 / M129 / Subtype 1) (Mycoplasmoides pneumoniae).